A 192-amino-acid chain; its full sequence is Ion-translocating oxidoreductase complex subunit A (192 aa).

6 helical membrane-spanning segments follow: residues 5–25 (LLLL…FLGL), 38–58 (AIGM…LSFL), 72–92 (LRTM…EMLV), 102–122 (ALGI…VALL), 134–154 (AIYG…FSAM), and 171–191 (AIAM…AGLI).

It belongs to the NqrDE/RnfAE family. As to quaternary structure, the complex is composed of six subunits: RnfA, RnfB, RnfC, RnfD, RnfE and RnfG.

The protein localises to the cell inner membrane. Functionally, part of a membrane-bound complex that couples electron transfer with translocation of ions across the membrane. The sequence is that of Ion-translocating oxidoreductase complex subunit A from Shewanella denitrificans (strain OS217 / ATCC BAA-1090 / DSM 15013).